Here is a 275-residue protein sequence, read N- to C-terminus: Undecaprenyl-diphosphatase (275 aa).

8 helical membrane passes run 1-21 (MDWV…FLPI), 42-62 (VKDA…LVYY), 80-100 (TLWT…LAFG), 107-127 (LFKP…MWLI), 147-167 (SLLI…SRSA), 184-204 (TKFS…LNLV), 214-234 (IGLL…YLAI), and 249-269 (FAVY…TGVM).

The protein belongs to the UppP family.

The protein resides in the cell membrane. It carries out the reaction di-trans,octa-cis-undecaprenyl diphosphate + H2O = di-trans,octa-cis-undecaprenyl phosphate + phosphate + H(+). Catalyzes the dephosphorylation of undecaprenyl diphosphate (UPP). Confers resistance to bacitracin. The chain is Undecaprenyl-diphosphatase from Deinococcus deserti (strain DSM 17065 / CIP 109153 / LMG 22923 / VCD115).